Consider the following 501-residue polypeptide: Inactive cytidine monophosphate-N-acetylneuraminic acid hydroxylase (501 aa).

This sequence belongs to the CMP-Neu5Ac hydroxylase family. In terms of tissue distribution, widely expressed. Highly expressed in thymus. Not expressed in brain. May be expressed in adult stem cells (at protein level).

Its subcellular location is the cytoplasm. Sialic acids are components of carbohydrate chains of glycoconjugates and are involved in cell-cell recognition and cell-pathogen interactions. That protein has no CMP-N-acetylneuraminate monooxygenase activity and is not able to convert CMP-N-acetylneuraminic acid (CMP-Neu5Ac) into its hydroxylated derivative CMP-N-glycolylneuraminic acid (CMP-Neu5Gc), a sialic acid abundantly expressed at the surface of many cells in vertebrates. However, it may play a role in Wnt signaling. This Homo sapiens (Human) protein is Inactive cytidine monophosphate-N-acetylneuraminic acid hydroxylase (CMAHP).